Consider the following 266-residue polypeptide: MVKQMFRALVALLLTLPVWLYAAPRVITLSPANTELAFAAGITPVGVSSYSDYPPEAQKIEQVSTWQGMNLERIVAMKPDLVVAWRGGNAERQVNQLTSLGIKVMWVDAVSIEQIADTLRQLAAWSPQPEKAQQAAQTLLNEYAALNAEYAGKAKKRVFLQFGMNPLFTSGKGSIQHQVLTTCGGENVFADSRVPWPQVSREQVLARHPQAIIVAGKAGEILKIEQYWGNLLKIPVIPLNSDWFERASPRIILAAKQLCNALSQVN.

The N-terminal stretch at 1–22 (MVKQMFRALVALLLTLPVWLYA) is a signal peptide. The Fe/B12 periplasmic-binding domain maps to 25–266 (RVITLSPANT…QLCNALSQVN (242 aa)). Residues tyrosine 50 and 242-246 (DWFER) contribute to the cyanocob(III)alamin site. Cysteine 183 and cysteine 259 are joined by a disulfide.

The protein belongs to the BtuF family. The complex is composed of two ATP-binding proteins (BtuD), two transmembrane proteins (BtuC) and a solute-binding protein (BtuF).

The protein localises to the periplasm. Part of the ABC transporter complex BtuCDF involved in vitamin B12 import. Binds vitamin B12 and delivers it to the periplasmic surface of BtuC. The polypeptide is Vitamin B12-binding protein (Salmonella choleraesuis (strain SC-B67)).